A 228-amino-acid polypeptide reads, in one-letter code: SPbeta prophage-derived uncharacterized protein YomL (228 aa).

Positions 1–28 (MRKKRVITCVMAASLTLGSLLPAGYATA) are cleaved as a signal peptide.

This Bacillus subtilis (strain 168) protein is SPbeta prophage-derived uncharacterized protein YomL (yomL).